The primary structure comprises 67 residues: Protein AaeX (67 aa).

2 helical membrane passes run 3–23 and 47–67; these read LFPV…ELLL and PALF…RLFV.

This sequence belongs to the AaeX family.

It is found in the cell membrane. The polypeptide is Protein AaeX (Escherichia coli O157:H7).